The sequence spans 727 residues: Polyphosphate kinase (727 aa).

Asn-82 contacts ATP. The Mg(2+) site is built by Arg-412 and Arg-442. His-472 acts as the Phosphohistidine intermediate in catalysis. Residues Tyr-505, Arg-601, and His-629 each contribute to the ATP site.

It belongs to the polyphosphate kinase 1 (PPK1) family. Mg(2+) serves as cofactor. In terms of processing, an intermediate of this reaction is the autophosphorylated ppk in which a phosphate is covalently linked to a histidine residue through a N-P bond.

It carries out the reaction [phosphate](n) + ATP = [phosphate](n+1) + ADP. Catalyzes the reversible transfer of the terminal phosphate of ATP to form a long-chain polyphosphate (polyP). This chain is Polyphosphate kinase, found in Pseudomonas putida (strain ATCC 47054 / DSM 6125 / CFBP 8728 / NCIMB 11950 / KT2440).